A 208-amino-acid polypeptide reads, in one-letter code: Holliday junction resolvase RecU (208 aa).

Positions 87, 89, 102, and 121 each coordinate Mg(2+).

The protein belongs to the RecU family. Requires Mg(2+) as cofactor.

It localises to the cytoplasm. It catalyses the reaction Endonucleolytic cleavage at a junction such as a reciprocal single-stranded crossover between two homologous DNA duplexes (Holliday junction).. Functionally, endonuclease that resolves Holliday junction intermediates in genetic recombination. Cleaves mobile four-strand junctions by introducing symmetrical nicks in paired strands. Promotes annealing of linear ssDNA with homologous dsDNA. Required for DNA repair, homologous recombination and chromosome segregation. This Staphylococcus aureus (strain Mu3 / ATCC 700698) protein is Holliday junction resolvase RecU.